The chain runs to 1337 residues: DNA-directed RNA polymerase subunit beta' (1337 aa).

Positions 60, 62, 75, and 78 each coordinate Zn(2+). 3 residues coordinate Mg(2+): Asp-536, Asp-538, and Asp-540. Zn(2+)-binding residues include Cys-895, Cys-974, Cys-981, and Cys-984.

Belongs to the RNA polymerase beta' chain family. As to quaternary structure, the RNAP catalytic core consists of 2 alpha, 1 beta, 1 beta' and 1 omega subunit. When a sigma factor is associated with the core the holoenzyme is formed, which can initiate transcription. Mg(2+) is required as a cofactor. The cofactor is Zn(2+).

It catalyses the reaction RNA(n) + a ribonucleoside 5'-triphosphate = RNA(n+1) + diphosphate. Its function is as follows. DNA-dependent RNA polymerase catalyzes the transcription of DNA into RNA using the four ribonucleoside triphosphates as substrates. This is DNA-directed RNA polymerase subunit beta' from Bifidobacterium adolescentis (strain ATCC 15703 / DSM 20083 / NCTC 11814 / E194a).